Consider the following 186-residue polypeptide: Mating-type-like protein ALPHA2 (186 aa).

The segment at residues 108–170 (ASYRGHRFTR…NRRRKQKSIY (63 aa)) is a DNA-binding region (homeobox; TALE-type).

This sequence belongs to the TALE/M-ATYP homeobox family.

The protein resides in the nucleus. Its function is as follows. Mating type proteins are sequence specific DNA-binding proteins that act as master switches in yeast differentiation by controlling gene expression in a cell type-specific fashion. This Candida glabrata (strain ATCC 2001 / BCRC 20586 / JCM 3761 / NBRC 0622 / NRRL Y-65 / CBS 138) (Yeast) protein is Mating-type-like protein ALPHA2 (MTL1ALPHA2).